Consider the following 247-residue polypeptide: 23S rRNA (guanosine-2'-O-)-methyltransferase RlmB (247 aa).

The S-adenosyl-L-methionine site is built by G197, I217, and L226.

Belongs to the class IV-like SAM-binding methyltransferase superfamily. RNA methyltransferase TrmH family. RlmB subfamily.

Its subcellular location is the cytoplasm. It carries out the reaction guanosine(2251) in 23S rRNA + S-adenosyl-L-methionine = 2'-O-methylguanosine(2251) in 23S rRNA + S-adenosyl-L-homocysteine + H(+). In terms of biological role, specifically methylates the ribose of guanosine 2251 in 23S rRNA. This Vibrio cholerae serotype O1 (strain ATCC 39315 / El Tor Inaba N16961) protein is 23S rRNA (guanosine-2'-O-)-methyltransferase RlmB.